Consider the following 269-residue polypeptide: Ribosomal RNA small subunit methyltransferase A (269 aa).

The S-adenosyl-L-methionine site is built by N18, L20, G45, E66, D91, and N112.

This sequence belongs to the class I-like SAM-binding methyltransferase superfamily. rRNA adenine N(6)-methyltransferase family. RsmA subfamily.

The protein localises to the cytoplasm. The catalysed reaction is adenosine(1518)/adenosine(1519) in 16S rRNA + 4 S-adenosyl-L-methionine = N(6)-dimethyladenosine(1518)/N(6)-dimethyladenosine(1519) in 16S rRNA + 4 S-adenosyl-L-homocysteine + 4 H(+). Specifically dimethylates two adjacent adenosines (A1518 and A1519) in the loop of a conserved hairpin near the 3'-end of 16S rRNA in the 30S particle. May play a critical role in biogenesis of 30S subunits. This Vibrio parahaemolyticus serotype O3:K6 (strain RIMD 2210633) protein is Ribosomal RNA small subunit methyltransferase A.